A 1547-amino-acid chain; its full sequence is Mediator of RNA polymerase II transcription subunit 12 (1547 aa).

Disordered stretches follow at residues 1 to 63 (MTSR…RPHI) and 1356 to 1509 (PVIP…QQRD). A compositionally biased stretch (pro residues) spans 1357–1369 (VIPPLEPPQPPNP). Polar residues predominate over residues 1379–1390 (YQSPQMTSNTAA). Composition is skewed to low complexity over residues 1398 to 1413 (QQQQQSQTLQPSQQTQ) and 1446 to 1468 (LSPLQQMQHMQQLQGLAQQRASQ). Polar residues-rich tracts occupy residues 1469-1480 (PSPIHSQRPTSV) and 1499-1509 (AHTSYVNQQRD).

It belongs to the Mediator complex subunit 12 family. In terms of assembly, component of the SRB8-11 complex, which itself associates with the Mediator complex.

It is found in the nucleus. In terms of biological role, component of the SRB8-11 complex. The SRB8-11 complex is a regulatory module of the Mediator complex which is itself involved in regulation of basal and activated RNA polymerase II-dependent transcription. The SRB8-11 complex may be involved in the transcriptional repression of a subset of genes regulated by Mediator. It may inhibit the association of the Mediator complex with RNA polymerase II to form the holoenzyme complex. This is Mediator of RNA polymerase II transcription subunit 12 (SRB8) from Phaeosphaeria nodorum (strain SN15 / ATCC MYA-4574 / FGSC 10173) (Glume blotch fungus).